Reading from the N-terminus, the 364-residue chain is Aspartate aminotransferase (364 aa).

Positions 23, 99, and 143 each coordinate L-aspartate. K200 carries the post-translational modification N6-(pyridoxal phosphate)lysine. An L-aspartate-binding site is contributed by R320.

This sequence belongs to the class-I pyridoxal-phosphate-dependent aminotransferase family. Homodimer. Requires pyridoxal 5'-phosphate as cofactor.

The protein localises to the cytoplasm. It carries out the reaction L-aspartate + 2-oxoglutarate = oxaloacetate + L-glutamate. The sequence is that of Aspartate aminotransferase (aspC) from Thermococcus kodakarensis (strain ATCC BAA-918 / JCM 12380 / KOD1) (Pyrococcus kodakaraensis (strain KOD1)).